A 195-amino-acid chain; its full sequence is CASP-like protein 1B1 (195 aa).

Over 1-22 (MGLQNEEKLELGCTGLQPKPKK) the chain is Cytoplasmic. A helical transmembrane segment spans residues 23–43 (WVLLMVRVVAFLATAAATLVM). Residues 44–75 (ALNKETKTLVVATVGNTPIKVTLTAKFQHTPA) lie on the Extracellular side of the membrane. Residues 76-96 (FVFFVIANGMASFHNLLMIMV) traverse the membrane as a helical segment. Over 97–109 (ELCGQKLDYKGMR) the chain is Cytoplasmic. The chain crosses the membrane as a helical span at residues 110–130 (LAMVAILDMMTVALVSGGASA). Topologically, residues 131–163 (ATFMAELGKNGNSHARWDKICDKFETFCDHGGA) are extracellular. The chain crosses the membrane as a helical span at residues 164-184 (ALIASSAGLILMMIISVMSIM). The Cytoplasmic portion of the chain corresponds to 185 to 195 (KLLIKPKSDSS).

The protein belongs to the Casparian strip membrane proteins (CASP) family. In terms of assembly, homodimer and heterodimers.

It is found in the cell membrane. The sequence is that of CASP-like protein 1B1 from Populus trichocarpa (Western balsam poplar).